The following is a 292-amino-acid chain: 1D-myo-inositol 2-acetamido-2-deoxy-alpha-D-glucopyranoside deacetylase (292 aa).

Residues His12, Asp15, and His147 each coordinate Zn(2+).

Belongs to the MshB deacetylase family. Zn(2+) serves as cofactor.

The catalysed reaction is 1D-myo-inositol 2-acetamido-2-deoxy-alpha-D-glucopyranoside + H2O = 1D-myo-inositol 2-amino-2-deoxy-alpha-D-glucopyranoside + acetate. Functionally, catalyzes the deacetylation of 1D-myo-inositol 2-acetamido-2-deoxy-alpha-D-glucopyranoside (GlcNAc-Ins) in the mycothiol biosynthesis pathway. The polypeptide is 1D-myo-inositol 2-acetamido-2-deoxy-alpha-D-glucopyranoside deacetylase (Rhodococcus opacus (strain B4)).